A 386-amino-acid polypeptide reads, in one-letter code: MILTGAASTFPIVARVLNAMNRRMYAATTLSSAKSISAESLNLRSDSNSEAAHGASESETRVSLRKKRIKQDDLEPVKKCSARETKARKDMCGLPDIEDSPYKKTNGTASSRTRKLNSYIKSTEASPSASSIKTAGLGIPPENWEKVLEGIRKMKPSEEAPVNAVECDRTGSFLPPKERRFYVLIGTLLSSQTKEHITGAAVERLHQNGLLTPEAIDKADESTIKELIYPVGFYTRKATNVKKVAKICLMEYDGDIPRTLEELLSLPGVGPKIAHLVLHVAWNDVQGICVDTHVHRICNRLGWVSKPGTKQKTSSPEETRVALQQWLPKGEWVAINFLLVGFGQTICTPLRPHCGTCSITEICPSAFKETPSTSSKLKKSIKSKKL.

The transit peptide at 1–50 (MILTGAASTFPIVARVLNAMNRRMYAATTLSSAKSISAESLNLRSDSNSE) directs the protein to the chloroplast. The disordered stretch occupies residues 44–66 (RSDSNSEAAHGASESETRVSLRK). Residues 252–278 (YDGDIPRTLEELLSLPGVGPKIAHLVL) enclose the HhH domain. Residue Lys-272 is the Nucleophile; for N-glycosylase activity of the active site. [4Fe-4S] cluster contacts are provided by Cys-347, Cys-354, Cys-357, and Cys-363.

The protein belongs to the Nth/MutY family. The cofactor is [4Fe-4S] cluster.

The protein localises to the plastid. It localises to the chloroplast stroma. It is found in the chloroplast nucleoid. The enzyme catalyses 2'-deoxyribonucleotide-(2'-deoxyribose 5'-phosphate)-2'-deoxyribonucleotide-DNA = a 3'-end 2'-deoxyribonucleotide-(2,3-dehydro-2,3-deoxyribose 5'-phosphate)-DNA + a 5'-end 5'-phospho-2'-deoxyribonucleoside-DNA + H(+). Bifunctional DNA N-glycosylase with associated apurinic/apyrimidinic (AP) lyase function that catalyzes the first step in base excision repair (BER), the primary repair pathway for the repair of oxidative DNA damage. The DNA N-glycosylase activity releases the damaged DNA base from DNA by cleaving the N-glycosidic bond, leaving an AP site. The AP lyase activity cleaves the phosphodiester bond 3' to the AP site by a beta-elimination. Primarily recognizes and repairs oxidative base damage of pyrimidines. The chain is Endonuclease III homolog 2, chloroplastic (NTH2) from Arabidopsis thaliana (Mouse-ear cress).